The chain runs to 245 residues: 5-oxoprolinase subunit A (245 aa).

This sequence belongs to the LamB/PxpA family. In terms of assembly, forms a complex composed of PxpA, PxpB and PxpC.

The enzyme catalyses 5-oxo-L-proline + ATP + 2 H2O = L-glutamate + ADP + phosphate + H(+). Functionally, catalyzes the cleavage of 5-oxoproline to form L-glutamate coupled to the hydrolysis of ATP to ADP and inorganic phosphate. The chain is 5-oxoprolinase subunit A from Neisseria meningitidis serogroup C (strain 053442).